The sequence spans 566 residues: MEIIFGQNKKEQLEPVQAKVTGSIPAWLQGTLLRNGPGMHTVGESKYNHWFDGLALLHSFSIRDGEVFYRSKYLQSDTYIANIEANRIVVSEFGTMAYPDPCKNIFSKAFSYLSHTIPDFTDNCLINIMKCGEDFYATTETNYIRKIDPQTLETLEKVDYRKYVAVNLATSHPHYDEAGNVLNMGTSVVDKGRTKYVIFKIPATVPDSKKKGKSPVKHAEVFCSISSRSLLSPSYYHSFGVTENYVVFLEQPFKLDILKMATAYMRGVSWASCMSFDREDKTYIHIIDQRTRKPVPTKFYTDPMVVFHHVNAYEEDGCVLFDVIAYEDSSLYQLFYLANLNKDFEEKSRLTSVPTLRRFAVPLHVDKDAEVGSNLVKVSSTTATALKEKDGHVYCQPEVLYEGLELPRINYAYNGKPYRYIFAAEVQWSPVPTKILKYDILTKSSLKWSEESCWPAEPLFVPTPGAKDEDDGVILSAIVSTDPQKLPFLLILDAKSFTELARASVDADMHLDLHGLFIPDADWNAVKQTPAETQEVENSDHPTDPTAPELSHSENDFTAGHGGSSL.

Histidine 172, histidine 237, histidine 308, and histidine 514 together coordinate Fe cation. The tract at residues 530–566 (PAETQEVENSDHPTDPTAPELSHSENDFTAGHGGSSL) is disordered.

Belongs to the carotenoid oxygenase family. Fe(2+) serves as cofactor. In terms of tissue distribution, expressed in liver, kidney, small intestine and testis.

The protein resides in the cytoplasm. It is found in the cytosol. The enzyme catalyses all-trans-beta-carotene + O2 = 2 all-trans-retinal. Its pathway is cofactor metabolism; retinol metabolism. Symmetrically cleaves beta-carotene into two molecules of retinal using a dioxygenase mechanism. The polypeptide is Beta,beta-carotene 15,15'-dioxygenase (Mus musculus (Mouse)).